A 474-amino-acid chain; its full sequence is tRNA-2-methylthio-N(6)-dimethylallyladenosine synthase (474 aa).

Residues 3-120 form the MTTase N-terminal domain; it reads KKLHIKTWGC…LPDMIEQVRR (118 aa). Positions 12, 49, 83, 157, 161, and 164 each coordinate [4Fe-4S] cluster. Residues 143 to 375 enclose the Radical SAM core domain; the sequence is RAEGPTAFVS…QDRITQQAMR (233 aa). Residues 378 to 441 form the TRAM domain; that stretch reads RHMMGTVQRI…TNSLRGKFIR (64 aa).

The protein belongs to the methylthiotransferase family. MiaB subfamily. As to quaternary structure, monomer. [4Fe-4S] cluster is required as a cofactor.

The protein localises to the cytoplasm. The enzyme catalyses N(6)-dimethylallyladenosine(37) in tRNA + (sulfur carrier)-SH + AH2 + 2 S-adenosyl-L-methionine = 2-methylsulfanyl-N(6)-dimethylallyladenosine(37) in tRNA + (sulfur carrier)-H + 5'-deoxyadenosine + L-methionine + A + S-adenosyl-L-homocysteine + 2 H(+). Catalyzes the methylthiolation of N6-(dimethylallyl)adenosine (i(6)A), leading to the formation of 2-methylthio-N6-(dimethylallyl)adenosine (ms(2)i(6)A) at position 37 in tRNAs that read codons beginning with uridine. This Shewanella sp. (strain W3-18-1) protein is tRNA-2-methylthio-N(6)-dimethylallyladenosine synthase.